The primary structure comprises 239 residues: Skn-1 dependent zygotic transcript 1 protein (239 aa).

In terms of biological role, may have a role in mesendoderm development during embryogenesis. This chain is Skn-1 dependent zygotic transcript 1 protein, found in Caenorhabditis briggsae.